The primary structure comprises 144 residues: Large ribosomal subunit protein uL11 (144 aa).

It belongs to the universal ribosomal protein uL11 family. Part of the ribosomal stalk of the 50S ribosomal subunit. Interacts with L10 and the large rRNA to form the base of the stalk. L10 forms an elongated spine to which L12 dimers bind in a sequential fashion forming a multimeric L10(L12)X complex. One or more lysine residues are methylated.

Its function is as follows. Forms part of the ribosomal stalk which helps the ribosome interact with GTP-bound translation factors. This Streptomyces sp. (strain FRI-5) protein is Large ribosomal subunit protein uL11.